A 327-amino-acid chain; its full sequence is 2-methoxy-6-polyprenyl-1,4-benzoquinol methylase, mitochondrial (327 aa).

Residues 1 to 49 (MAAPRCCVLWRVCGRGWWRATGHCRLPGCHRSWPWATLGTRSLSQEKRA) constitute a mitochondrion transit peptide. Residues Thr117, Asp171, and 199–200 (DA) contribute to the S-adenosyl-L-methionine site.

The protein belongs to the class I-like SAM-binding methyltransferase superfamily. MenG/UbiE family. Component of a multi-subunit COQ enzyme complex, composed of at least COQ3, COQ4, COQ5, COQ6, COQ7 and COQ9. Interacts with PYURF; the interaction is direct, stabilizes COQ5 protein and associates PYURF with COQ enzyme complex.

The protein resides in the mitochondrion inner membrane. The enzyme catalyses 2-methoxy-6-(all-trans-decaprenyl)benzene-1,4-diol + S-adenosyl-L-methionine = 5-methoxy-2-methyl-3-(all-trans-decaprenyl)benzene-1,4-diol + S-adenosyl-L-homocysteine + H(+). The protein operates within cofactor biosynthesis; ubiquinone biosynthesis. Methyltransferase required for the conversion of 2-decaprenyl-6-methoxy-1,4-benzoquinol (DDMQH2) to 2-decaprenyl-3-methyl-6-methoxy-1,4-benzoquinol (DMQH2). The sequence is that of 2-methoxy-6-polyprenyl-1,4-benzoquinol methylase, mitochondrial from Mus musculus (Mouse).